The following is a 326-amino-acid chain: tRNA dimethylallyltransferase 2 (326 aa).

14-21 lines the ATP pocket; the sequence is GPTASGKT. Residue 16-21 participates in substrate binding; the sequence is TASGKT. The interval 39-42 is interaction with substrate tRNA; that stretch reads DSMQ.

Belongs to the IPP transferase family. In terms of assembly, monomer. Mg(2+) serves as cofactor.

The catalysed reaction is adenosine(37) in tRNA + dimethylallyl diphosphate = N(6)-dimethylallyladenosine(37) in tRNA + diphosphate. Its function is as follows. Catalyzes the transfer of a dimethylallyl group onto the adenine at position 37 in tRNAs that read codons beginning with uridine, leading to the formation of N6-(dimethylallyl)adenosine (i(6)A). This chain is tRNA dimethylallyltransferase 2, found in Geotalea daltonii (strain DSM 22248 / JCM 15807 / FRC-32) (Geobacter daltonii).